The primary structure comprises 405 residues: Deoxyguanosinetriphosphate triphosphohydrolase-like protein (405 aa).

One can recognise an HD domain in the interval R75 to N219.

It belongs to the dGTPase family. Type 2 subfamily.

This chain is Deoxyguanosinetriphosphate triphosphohydrolase-like protein, found in Rhizobium leguminosarum bv. trifolii (strain WSM2304).